Consider the following 500-residue polypeptide: Probable cytosol aminopeptidase (500 aa).

Mn(2+)-binding residues include K264 and D269. K276 is an active-site residue. Mn(2+) is bound by residues D287, D346, and E348. Residue R350 is part of the active site.

The protein belongs to the peptidase M17 family. Mn(2+) is required as a cofactor.

Its subcellular location is the cytoplasm. The catalysed reaction is Release of an N-terminal amino acid, Xaa-|-Yaa-, in which Xaa is preferably Leu, but may be other amino acids including Pro although not Arg or Lys, and Yaa may be Pro. Amino acid amides and methyl esters are also readily hydrolyzed, but rates on arylamides are exceedingly low.. It carries out the reaction Release of an N-terminal amino acid, preferentially leucine, but not glutamic or aspartic acids.. Presumably involved in the processing and regular turnover of intracellular proteins. Catalyzes the removal of unsubstituted N-terminal amino acids from various peptides. The sequence is that of Probable cytosol aminopeptidase from Rhodopseudomonas palustris (strain TIE-1).